A 412-amino-acid polypeptide reads, in one-letter code: NAD-dependent dihydropyrimidine dehydrogenase subunit PreT (412 aa).

E286 is an NAD(+) binding site.

The protein belongs to the NADH dehydrogenase family. Heterotetramer of 2 PreA and 2 PreT subunits.

It catalyses the reaction 5,6-dihydrouracil + NAD(+) = uracil + NADH + H(+). The enzyme catalyses 5,6-dihydrothymine + NAD(+) = thymine + NADH + H(+). Functionally, involved in pyrimidine base degradation. Catalyzes physiologically the reduction of uracil to 5,6-dihydrouracil (DHU) by using NADH as a specific cosubstrate. It also catalyzes the reverse reaction and the reduction of thymine to 5,6-dihydrothymine (DHT). The polypeptide is NAD-dependent dihydropyrimidine dehydrogenase subunit PreT (preT) (Escherichia coli O157:H7).